The following is a 182-amino-acid chain: Ribosome maturation factor RimM (182 aa).

In terms of domain architecture, PRC barrel spans 103–182 (GDDYYWKDLM…VIEADWDPGF (80 aa)).

This sequence belongs to the RimM family. In terms of assembly, binds ribosomal protein uS19.

It is found in the cytoplasm. Functionally, an accessory protein needed during the final step in the assembly of 30S ribosomal subunit, possibly for assembly of the head region. Essential for efficient processing of 16S rRNA. May be needed both before and after RbfA during the maturation of 16S rRNA. It has affinity for free ribosomal 30S subunits but not for 70S ribosomes. This Serratia proteamaculans (strain 568) protein is Ribosome maturation factor RimM.